The primary structure comprises 226 residues: Glutathione peroxidase 3 (226 aa).

Residues Met1–Gly24 form the signal peptide. Residue Sec73 is part of the active site. Position 73 (Sec73) is a non-standard amino acid, selenocysteine.

This sequence belongs to the glutathione peroxidase family. In terms of assembly, homotetramer. As to expression, expressed intensively in the kidney and adrenal gland, and weakly in the cerebellum, heart, and lung. Secreted in plasma.

Its subcellular location is the secreted. It carries out the reaction 2 glutathione + H2O2 = glutathione disulfide + 2 H2O. The catalysed reaction is tert-butyl hydroperoxide + 2 glutathione = tert-butanol + glutathione disulfide + H2O. Its function is as follows. Protects cells and enzymes from oxidative damage, by catalyzing the reduction of hydrogen peroxide, lipid peroxides and organic hydroperoxide, by glutathione. This chain is Glutathione peroxidase 3, found in Macaca fuscata fuscata (Japanese macaque).